The primary structure comprises 131 residues: Small ribosomal subunit protein bS6 (131 aa).

Residues 97–131 form a disordered region; it reads TEASPMVKAKDERRRDVAEDLDEEEVDDVAEDSEE. A compositionally biased stretch (basic and acidic residues) spans 104-114; the sequence is KAKDERRRDVA. The span at 115–131 shows a compositional bias: acidic residues; that stretch reads EDLDEEEVDDVAEDSEE.

It belongs to the bacterial ribosomal protein bS6 family.

In terms of biological role, binds together with bS18 to 16S ribosomal RNA. The chain is Small ribosomal subunit protein bS6 from Proteus mirabilis (strain HI4320).